Consider the following 137-residue polypeptide: Large ribosomal subunit protein uL16c (137 aa).

The protein belongs to the universal ribosomal protein uL16 family. In terms of assembly, part of the 50S ribosomal subunit.

It is found in the plastid. This is Large ribosomal subunit protein uL16c from Aneura mirabilis (Parasitic liverwort).